Reading from the N-terminus, the 265-residue chain is Transcription factor LBX1 (265 aa).

The segment covering 1-20 (MTSKDEAKSSSVEERRRHAL) has biased composition (basic and acidic residues). Residues 1–33 (MTSKDEAKSSSVEERRRHALDLLPPPANSNKPL) are disordered. The segment at residues 125–184 (RRKSRTAFTNHQIYELEKRFLYQKYLSPADRDQIAQQLGLTNAQVITWFQNRRAKLKRDL) is a DNA-binding region (homeobox). The interval 212 to 265 (EEETNSVRDDSRSRSPQLGLSGHMPLSPSSPLTEQHTSKECSEDEEDVEIDVDD) is disordered. A compositionally biased stretch (acidic residues) spans 253–265 (SEDEEDVEIDVDD).

The protein localises to the nucleus. Functionally, transcription factor that controls hypaxial muscle development by down-regulating myod1 and cdkn1b/p27, thereby allowing myoblasts to proliferate before the onset of terminal differentiation. This is Transcription factor LBX1 from Xenopus tropicalis (Western clawed frog).